A 448-amino-acid chain; its full sequence is Probable glycine dehydrogenase (decarboxylating) subunit 1 (448 aa).

This sequence belongs to the GcvP family. N-terminal subunit subfamily. As to quaternary structure, the glycine cleavage system is composed of four proteins: P, T, L and H. In this organism, the P 'protein' is a heterodimer of two subunits.

The enzyme catalyses N(6)-[(R)-lipoyl]-L-lysyl-[glycine-cleavage complex H protein] + glycine + H(+) = N(6)-[(R)-S(8)-aminomethyldihydrolipoyl]-L-lysyl-[glycine-cleavage complex H protein] + CO2. Its function is as follows. The glycine cleavage system catalyzes the degradation of glycine. The P protein binds the alpha-amino group of glycine through its pyridoxal phosphate cofactor; CO(2) is released and the remaining methylamine moiety is then transferred to the lipoamide cofactor of the H protein. The chain is Probable glycine dehydrogenase (decarboxylating) subunit 1 from Listeria monocytogenes serotype 4b (strain F2365).